The chain runs to 205 residues: uncharacterized protein (205 aa).

In terms of domain architecture, HTH tetR-type spans 11-71; sequence KTRRALVDAA…EMVDEAGLML (61 aa).

This is an uncharacterized protein from Haemophilus influenzae (strain ATCC 51907 / DSM 11121 / KW20 / Rd).